Consider the following 208-residue polypeptide: Protein-L-isoaspartate O-methyltransferase (208 aa).

Residue Ser-59 is part of the active site.

Belongs to the methyltransferase superfamily. L-isoaspartyl/D-aspartyl protein methyltransferase family.

The protein localises to the cytoplasm. The catalysed reaction is [protein]-L-isoaspartate + S-adenosyl-L-methionine = [protein]-L-isoaspartate alpha-methyl ester + S-adenosyl-L-homocysteine. In terms of biological role, catalyzes the methyl esterification of L-isoaspartyl residues in peptides and proteins that result from spontaneous decomposition of normal L-aspartyl and L-asparaginyl residues. It plays a role in the repair and/or degradation of damaged proteins. The sequence is that of Protein-L-isoaspartate O-methyltransferase from Proteus mirabilis (strain HI4320).